The sequence spans 250 residues: 1-(5-phosphoribosyl)-5-[(5-phosphoribosylamino)methylideneamino] imidazole-4-carboxamide isomerase (250 aa).

Residue Asp12 is the Proton acceptor of the active site. The Proton donor role is filled by Asp134.

This sequence belongs to the HisA/HisF family.

The protein resides in the cytoplasm. It carries out the reaction 1-(5-phospho-beta-D-ribosyl)-5-[(5-phospho-beta-D-ribosylamino)methylideneamino]imidazole-4-carboxamide = 5-[(5-phospho-1-deoxy-D-ribulos-1-ylimino)methylamino]-1-(5-phospho-beta-D-ribosyl)imidazole-4-carboxamide. The protein operates within amino-acid biosynthesis; L-histidine biosynthesis; L-histidine from 5-phospho-alpha-D-ribose 1-diphosphate: step 4/9. The protein is 1-(5-phosphoribosyl)-5-[(5-phosphoribosylamino)methylideneamino] imidazole-4-carboxamide isomerase of Actinobacillus pleuropneumoniae serotype 3 (strain JL03).